We begin with the raw amino-acid sequence, 465 residues long: Methylenetetrahydrofolate--tRNA-(uracil-5-)-methyltransferase TrmFO (465 aa).

3-8 contributes to the FAD binding site; the sequence is GAGLAG.

Belongs to the MnmG family. TrmFO subfamily. FAD serves as cofactor.

The protein resides in the cytoplasm. The catalysed reaction is uridine(54) in tRNA + (6R)-5,10-methylene-5,6,7,8-tetrahydrofolate + NADH + H(+) = 5-methyluridine(54) in tRNA + (6S)-5,6,7,8-tetrahydrofolate + NAD(+). The enzyme catalyses uridine(54) in tRNA + (6R)-5,10-methylene-5,6,7,8-tetrahydrofolate + NADPH + H(+) = 5-methyluridine(54) in tRNA + (6S)-5,6,7,8-tetrahydrofolate + NADP(+). Functionally, catalyzes the folate-dependent formation of 5-methyl-uridine at position 54 (M-5-U54) in all tRNAs. The protein is Methylenetetrahydrofolate--tRNA-(uracil-5-)-methyltransferase TrmFO of Bradyrhizobium sp. (strain ORS 278).